The primary structure comprises 699 residues: Elongation factor G (699 aa).

A tr-type G domain is found at 10-292 (NRTRNIGIMA…AVIDYLPSPT (283 aa)). Residues 19 to 26 (AHIDAGKT), 90 to 94 (DTPGH), and 144 to 147 (NKMD) contribute to the GTP site. The segment at 292–312 (TDVPAIRGEEDDGSEGSRSAS) is disordered.

The protein belongs to the TRAFAC class translation factor GTPase superfamily. Classic translation factor GTPase family. EF-G/EF-2 subfamily.

It is found in the cytoplasm. In terms of biological role, catalyzes the GTP-dependent ribosomal translocation step during translation elongation. During this step, the ribosome changes from the pre-translocational (PRE) to the post-translocational (POST) state as the newly formed A-site-bound peptidyl-tRNA and P-site-bound deacylated tRNA move to the P and E sites, respectively. Catalyzes the coordinated movement of the two tRNA molecules, the mRNA and conformational changes in the ribosome. This Coxiella burnetii (strain RSA 331 / Henzerling II) protein is Elongation factor G.